A 254-amino-acid chain; its full sequence is MPQQIELRDIALQAAQPLVHGVSLTLQRGRVLALVGGSGSGKSLTCAAALGILPAGVRQTAGEILADGKPVSPCALRGIKIATIMQNPRSAFNPLHTMHTHARETCLALGKPADDATLTAAIEAVGLENAARVLKLYPFEMSGGMLQRMMIAMAVLCESPFIIADEPTTDLDVVAQARILDLLESIMQKQAPGMLLVTHDMGVVARLADDVAVMSDGKIVEQGDVETLFNAPKHAVTRSLVSAHLALYGMELAS.

An ABC transporter domain is found at 2 to 241 (PQQIELRDIA…PKHAVTRSLV (240 aa)). Residue 36-43 (GGSGSGKS) participates in ATP binding.

The protein belongs to the ABC transporter superfamily. Nickel importer (TC 3.A.1.5.3) family. In terms of assembly, the complex is composed of two ATP-binding proteins (NikD and NikE), two transmembrane proteins (NikB and NikC) and a solute-binding protein (NikA).

It localises to the cell inner membrane. It carries out the reaction Ni(2+)(out) + ATP + H2O = Ni(2+)(in) + ADP + phosphate + H(+). Functionally, part of the ABC transporter complex NikABCDE involved in nickel import. Responsible for energy coupling to the transport system. This chain is Nickel import ATP-binding protein NikD, found in Shigella dysenteriae serotype 1 (strain Sd197).